The following is a 422-amino-acid chain: Keratin, type II cytoskeletal 80 (422 aa).

A head region spans residues 1-82; sequence MACRSCVVGF…DPAIQQQKNN (82 aa). A Phosphoserine modification is found at Ser45. Residues 83 to 118 form a coil 1A region; the sequence is EKEEMKVLNDKFASLIGKVQALEQRNQLLETRWHFL. An IF rod domain is found at 83–394; the sequence is EKEEMKVLND…KLMEGEESRM (312 aa). The segment at 119-135 is linker 1; sequence QSQDSATFDLGHLYEEY. The tract at residues 136-227 is coil 1B; it reads QGRLQEELRK…SIYEQELKDL (92 aa). Residues 228 to 251 are linker 12; the sequence is AAQLKDVSVTVGMDSRCHIDLSGI. Residues 252–390 form a coil 2 region; that stretch reads VEEVKAQYDA…ATYRKLMEGE (139 aa). Positions 391 to 422 are tail; it reads ESRMDMPSATVVSAVQARCRTAPTLPHPLCSL.

The protein belongs to the intermediate filament family. Heterotetramer of two type I and two type II keratins.

The sequence is that of Keratin, type II cytoskeletal 80 (KRT80) from Bos taurus (Bovine).